The primary structure comprises 120 residues: Large ribosomal subunit protein uL18 (120 aa).

It belongs to the universal ribosomal protein uL18 family. In terms of assembly, part of the 50S ribosomal subunit; part of the 5S rRNA/L5/L18/L25 subcomplex. Contacts the 5S and 23S rRNAs.

In terms of biological role, this is one of the proteins that bind and probably mediate the attachment of the 5S RNA into the large ribosomal subunit, where it forms part of the central protuberance. In Ehrlichia ruminantium (strain Gardel), this protein is Large ribosomal subunit protein uL18.